The following is an 878-amino-acid chain: E3 ubiquitin-protein ligase BRE1-like 1 (878 aa).

The disordered stretch occupies residues 1 to 21 (MASTGEPDRKRRHFSSISPSE). Coiled coils occupy residues 48–76 (QNLK…IKEK), 200–261 (QLAL…ELQQ), 293–382 (SDRE…EKLQ), and 537–624 (LDMY…ILKS). An RING-type zinc finger spans residues 826 to 865 (CKACNDRPKEVVITKCYHLFCNPCVQKLTGTRQKKCPTCS).

The protein belongs to the BRE1 family. May act as a tetramer consisting of two copies of HUB1 and two copies of HUB2. Interacts with MED21. Ubiquitously expressed.

The protein localises to the nucleus. The enzyme catalyses S-ubiquitinyl-[E2 ubiquitin-conjugating enzyme]-L-cysteine + [acceptor protein]-L-lysine = [E2 ubiquitin-conjugating enzyme]-L-cysteine + N(6)-ubiquitinyl-[acceptor protein]-L-lysine.. It participates in protein modification; protein ubiquitination. Its function is as follows. E3 ubiquitin-protein ligase that monoubiquitinates H2B to form H2BK143ub1. H2BK143ub1 gives a specific tag for epigenetic transcriptional activation and is also prerequisite for H3K4me and maybe H3K79me. It thereby plays a central role in histone code and gene regulation. Forms a ubiquitin ligase complex in cooperation with the E2 enzyme UBC2/RAD6. Required for the regulation of flowering time and defense against necrotrophic fungal pathogens. Involved in the control of seed dormancy and germination. The polypeptide is E3 ubiquitin-protein ligase BRE1-like 1 (HUB1) (Arabidopsis thaliana (Mouse-ear cress)).